Here is a 133-residue protein sequence, read N- to C-terminus: ATP synthase epsilon chain, chloroplastic (133 aa).

It belongs to the ATPase epsilon chain family. In terms of assembly, F-type ATPases have 2 components, CF(1) - the catalytic core - and CF(0) - the membrane proton channel. CF(1) has five subunits: alpha(3), beta(3), gamma(1), delta(1), epsilon(1). CF(0) has three main subunits: a, b and c.

The protein localises to the plastid. Its subcellular location is the chloroplast thylakoid membrane. In terms of biological role, produces ATP from ADP in the presence of a proton gradient across the membrane. The protein is ATP synthase epsilon chain, chloroplastic of Cyanidium caldarium (Red alga).